The following is a 218-amino-acid chain: Peptide deformylase (218 aa).

The Fe cation site is built by Cys-130 and His-172. The active site involves Glu-173. Residue His-176 coordinates Fe cation.

This sequence belongs to the polypeptide deformylase family. The cofactor is Fe(2+).

It carries out the reaction N-terminal N-formyl-L-methionyl-[peptide] + H2O = N-terminal L-methionyl-[peptide] + formate. Functionally, removes the formyl group from the N-terminal Met of newly synthesized proteins. Requires at least a dipeptide for an efficient rate of reaction. N-terminal L-methionine is a prerequisite for activity but the enzyme has broad specificity at other positions. This chain is Peptide deformylase, found in Bifidobacterium adolescentis (strain ATCC 15703 / DSM 20083 / NCTC 11814 / E194a).